Reading from the N-terminus, the 217-residue chain is 3,4-dihydroxy-2-butanone 4-phosphate synthase (217 aa).

D-ribulose 5-phosphate-binding positions include 37–38, Asp-42, 150–154, and Glu-174; these read RE and RRGHT. Residue Glu-38 coordinates Mg(2+). His-153 provides a ligand contact to Mg(2+).

This sequence belongs to the DHBP synthase family. In terms of assembly, homodimer. It depends on Mg(2+) as a cofactor. The cofactor is Mn(2+).

The enzyme catalyses D-ribulose 5-phosphate = (2S)-2-hydroxy-3-oxobutyl phosphate + formate + H(+). Its pathway is cofactor biosynthesis; riboflavin biosynthesis; 2-hydroxy-3-oxobutyl phosphate from D-ribulose 5-phosphate: step 1/1. Functionally, catalyzes the conversion of D-ribulose 5-phosphate to formate and 3,4-dihydroxy-2-butanone 4-phosphate. This chain is 3,4-dihydroxy-2-butanone 4-phosphate synthase, found in Shewanella sp. (strain MR-4).